We begin with the raw amino-acid sequence, 131 residues long: Profilin-9 (131 aa).

Cys13 and Cys115 are oxidised to a cystine. Residues 81-97 (AVIRGKKGSGGITVKKT) carry the Involved in PIP2 interaction motif. Phosphothreonine is present on Thr111.

Belongs to the profilin family. Occurs in many kinds of cells as a complex with monomeric actin in a 1:1 ratio. Post-translationally, phosphorylated by MAP kinases.

Its subcellular location is the cytoplasm. The protein resides in the cytoskeleton. Binds to actin and affects the structure of the cytoskeleton. At high concentrations, profilin prevents the polymerization of actin, whereas it enhances it at low concentrations. The protein is Profilin-9 of Zea mays (Maize).